We begin with the raw amino-acid sequence, 444 residues long: 23S rRNA (uracil(1939)-C(5))-methyltransferase RlmD (444 aa).

The region spanning 5-67 is the TRAM domain; it reads RNRFDRTPFQ…RHFDEAKTVE (63 aa). The [4Fe-4S] cluster site is built by Cys-80, Cys-86, Cys-89, and Cys-168. Residues Gln-276, Phe-305, Asn-310, Glu-326, Asp-353, and Asp-374 each coordinate S-adenosyl-L-methionine. Residue Cys-400 is the Nucleophile of the active site.

It belongs to the class I-like SAM-binding methyltransferase superfamily. RNA M5U methyltransferase family. RlmD subfamily.

It carries out the reaction uridine(1939) in 23S rRNA + S-adenosyl-L-methionine = 5-methyluridine(1939) in 23S rRNA + S-adenosyl-L-homocysteine + H(+). Catalyzes the formation of 5-methyl-uridine at position 1939 (m5U1939) in 23S rRNA. The sequence is that of 23S rRNA (uracil(1939)-C(5))-methyltransferase RlmD from Xanthomonas campestris pv. campestris (strain 8004).